The following is a 160-amino-acid chain: Large ribosomal subunit protein uL22c (160 aa).

Belongs to the universal ribosomal protein uL22 family. In terms of assembly, part of the 50S ribosomal subunit.

The protein resides in the plastid. It is found in the chloroplast. This protein binds specifically to 23S rRNA. Its function is as follows. The globular domain of the protein is located near the polypeptide exit tunnel on the outside of the subunit, while an extended beta-hairpin is found that lines the wall of the exit tunnel in the center of the 70S ribosome. The sequence is that of Large ribosomal subunit protein uL22c (rpl22) from Aethionema cordifolium (Lebanon stonecress).